Here is a 505-residue protein sequence, read N- to C-terminus: MSQLAEKSCVTPADAAAPIPFDNTYARMPEAFYERVKPAAVAAPRLLRVNDALARQLRIDPAFLKSPQGVAVLSGNEIAPGSDPIAQAYAGHQFGSFVPQLGDGRAILLGEVVDAAGKRFDIQLKGSGRTRFSRRGDGRAAIGPVIREYIVSEAMAALGIPTTRSLAVVLTGEQVMRERVLPGGILTRVASSHLRVGTFQYFAARGDVENLRALADYAIARHYPDVCSAGDPYLAFFDAVVATLARLSARWMLVGFIHGVLNTDNTAIAGETIDYGPCAFIDAYRPDKVFSSIDQFGRYAFENQPAAVAWNLARFAEALLPLIADGGAKAIECANASIAAFDDHFNAAYLSGMRRKLGLVREMEGDLELASDLLTRMSENGADFTLTFRALCGAADDTKGDAEVRGLFADPSAFDQWTERWRQRLSLEGQSAEVRRTDMLSVNPMFIPRNHRIEAAIRDAEAGRFETFHELVEVLSHPFDDQPKFAGYAKPPRPEEEVRQTFCGT.

The ATP site is built by Gly-102, Gly-104, Arg-105, Lys-125, Asp-137, Gly-138, Arg-188, and Arg-195. Asp-264 functions as the Proton acceptor in the catalytic mechanism. Residues Asn-265 and Asp-274 each coordinate Mg(2+). Asp-274 is a binding site for ATP.

The protein belongs to the SELO family. The cofactor is Mg(2+). It depends on Mn(2+) as a cofactor.

It carries out the reaction L-seryl-[protein] + ATP = 3-O-(5'-adenylyl)-L-seryl-[protein] + diphosphate. The catalysed reaction is L-threonyl-[protein] + ATP = 3-O-(5'-adenylyl)-L-threonyl-[protein] + diphosphate. It catalyses the reaction L-tyrosyl-[protein] + ATP = O-(5'-adenylyl)-L-tyrosyl-[protein] + diphosphate. The enzyme catalyses L-histidyl-[protein] + UTP = N(tele)-(5'-uridylyl)-L-histidyl-[protein] + diphosphate. It carries out the reaction L-seryl-[protein] + UTP = O-(5'-uridylyl)-L-seryl-[protein] + diphosphate. The catalysed reaction is L-tyrosyl-[protein] + UTP = O-(5'-uridylyl)-L-tyrosyl-[protein] + diphosphate. In terms of biological role, nucleotidyltransferase involved in the post-translational modification of proteins. It can catalyze the addition of adenosine monophosphate (AMP) or uridine monophosphate (UMP) to a protein, resulting in modifications known as AMPylation and UMPylation. In Nitrobacter winogradskyi (strain ATCC 25391 / DSM 10237 / CIP 104748 / NCIMB 11846 / Nb-255), this protein is Protein nucleotidyltransferase YdiU.